The primary structure comprises 218 residues: Eukaryotic translation initiation factor 3 subunit K (218 aa).

A PCI domain is found at 44–205 (YDWGANLAVL…NIKTKNITEK (162 aa)).

Belongs to the eIF-3 subunit K family. In terms of assembly, component of the eukaryotic translation initiation factor 3 (eIF-3) complex.

It is found in the cytoplasm. Functionally, component of the eukaryotic translation initiation factor 3 (eIF-3) complex, which is involved in protein synthesis of a specialized repertoire of mRNAs and, together with other initiation factors, stimulates binding of mRNA and methionyl-tRNAi to the 40S ribosome. The eIF-3 complex specifically targets and initiates translation of a subset of mRNAs involved in cell proliferation. The chain is Eukaryotic translation initiation factor 3 subunit K from Bombyx mori (Silk moth).